We begin with the raw amino-acid sequence, 654 residues long: Fimbrin-2 (654 aa).

4 consecutive Calponin-homology (CH) domains span residues 124–241 (DSEK…KIQL), 269–372 (LPPE…QHRN), 394–500 (SREE…RYNI), and 515–623 (EITD…YWTL). Actin-binding stretches follow at residues 124–372 (DSEK…QHRN) and 394–623 (SREE…YWTL).

Interacts with F-actin.

It is found in the cytoplasm. The protein resides in the cytoskeleton. Functionally, cross-links actin filaments (F-actin). Stabilizes and prevents F-actin depolymerization mediated by profilin. May regulate actin cytoarchitecture, cell cycle, cell division, cell elongation and cytoplasmic tractus. This chain is Fimbrin-2, found in Arabidopsis thaliana (Mouse-ear cress).